The sequence spans 469 residues: ATP synthase subunit beta (469 aa).

Position 155–162 (155–162 (GGAGCGKT)) interacts with ATP.

Belongs to the ATPase alpha/beta chains family. In terms of assembly, F-type ATPases have 2 components, CF(1) - the catalytic core - and CF(0) - the membrane proton channel. CF(1) has five subunits: alpha(3), beta(3), gamma(1), delta(1), epsilon(1). CF(0) has three main subunits: a(1), b(2) and c(9-12). The alpha and beta chains form an alternating ring which encloses part of the gamma chain. CF(1) is attached to CF(0) by a central stalk formed by the gamma and epsilon chains, while a peripheral stalk is formed by the delta and b chains.

Its subcellular location is the cell inner membrane. The enzyme catalyses ATP + H2O + 4 H(+)(in) = ADP + phosphate + 5 H(+)(out). Produces ATP from ADP in the presence of a proton gradient across the membrane. The catalytic sites are hosted primarily by the beta subunits. This is ATP synthase subunit beta from Syntrophus aciditrophicus (strain SB).